Consider the following 334-residue polypeptide: Phosphate acyltransferase (334 aa).

The protein belongs to the PlsX family. As to quaternary structure, homodimer. Probably interacts with PlsY.

It is found in the cytoplasm. The enzyme catalyses a fatty acyl-[ACP] + phosphate = an acyl phosphate + holo-[ACP]. Its pathway is lipid metabolism; phospholipid metabolism. In terms of biological role, catalyzes the reversible formation of acyl-phosphate (acyl-PO(4)) from acyl-[acyl-carrier-protein] (acyl-ACP). This enzyme utilizes acyl-ACP as fatty acyl donor, but not acyl-CoA. In Caldicellulosiruptor saccharolyticus (strain ATCC 43494 / DSM 8903 / Tp8T 6331), this protein is Phosphate acyltransferase.